We begin with the raw amino-acid sequence, 341 residues long: Killer cell immunoglobulin-like receptor 2DL3 (341 aa).

Positions 1-21 (MSLMVVSMVCVGFFLLQGAWP) are cleaved as a signal peptide. Residues 22–245 (HEGVHRKPSL…SETGNPRHLH (224 aa)) lie on the Extracellular side of the membrane. Ig-like C2-type domains follow at residues 42 to 107 (EETV…VTHS) and 142 to 205 (GESV…FRDS). 2 disulfide bridges follow: Cys49–Cys100 and Cys149–Cys198. Asn84, Asn178, and Asn211 each carry an N-linked (GlcNAc...) asparagine glycan. Residues 220-239 (VTGNPSNSWPSPTEPSSETG) are disordered. Positions 223-239 (NPSNSWPSPTEPSSETG) are enriched in low complexity. A helical membrane pass occupies residues 246–265 (VLIGTSVVIILFILLLFFLL). At 266-341 (HRWCCNKKNA…VYTELPNAEP (76 aa)) the chain is on the cytoplasmic side.

The protein belongs to the immunoglobulin superfamily. In terms of assembly, interacts with ARRB2.

Its subcellular location is the cell membrane. Receptor on natural killer (NK) cells for HLA-C alleles (HLA-Cw1, HLA-Cw3 and HLA-Cw7). Inhibits the activity of NK cells thus preventing cell lysis. This is Killer cell immunoglobulin-like receptor 2DL3 from Homo sapiens (Human).